Reading from the N-terminus, the 399-residue chain is Probable dual-specificity RNA methyltransferase RlmN (399 aa).

The active-site Proton acceptor is the Glu-97. A Radical SAM core domain is found at 103–381 (YPDRATVCVS…CTVRVERGVS (279 aa)). Cysteines 110 and 386 form a disulfide. 3 residues coordinate [4Fe-4S] cluster: Cys-117, Cys-121, and Cys-124. S-adenosyl-L-methionine is bound by residues 203-204 (GE), Ser-235, 258-260 (SLH), and Asn-343. Cys-386 (S-methylcysteine intermediate) is an active-site residue.

It belongs to the radical SAM superfamily. RlmN family. The cofactor is [4Fe-4S] cluster.

It localises to the cytoplasm. The enzyme catalyses adenosine(2503) in 23S rRNA + 2 reduced [2Fe-2S]-[ferredoxin] + 2 S-adenosyl-L-methionine = 2-methyladenosine(2503) in 23S rRNA + 5'-deoxyadenosine + L-methionine + 2 oxidized [2Fe-2S]-[ferredoxin] + S-adenosyl-L-homocysteine. It carries out the reaction adenosine(37) in tRNA + 2 reduced [2Fe-2S]-[ferredoxin] + 2 S-adenosyl-L-methionine = 2-methyladenosine(37) in tRNA + 5'-deoxyadenosine + L-methionine + 2 oxidized [2Fe-2S]-[ferredoxin] + S-adenosyl-L-homocysteine. Its function is as follows. Specifically methylates position 2 of adenine 2503 in 23S rRNA and position 2 of adenine 37 in tRNAs. The chain is Probable dual-specificity RNA methyltransferase RlmN from Roseiflexus sp. (strain RS-1).